The sequence spans 427 residues: Histidine--tRNA ligase (427 aa).

Belongs to the class-II aminoacyl-tRNA synthetase family. Homodimer.

The protein resides in the cytoplasm. It carries out the reaction tRNA(His) + L-histidine + ATP = L-histidyl-tRNA(His) + AMP + diphosphate + H(+). This is Histidine--tRNA ligase (hisS) from Mycobacterium leprae (strain TN).